We begin with the raw amino-acid sequence, 270 residues long: Malonyl-[acyl-carrier protein] O-methyltransferase (270 aa).

Belongs to the methyltransferase superfamily.

The enzyme catalyses malonyl-[ACP] + S-adenosyl-L-methionine = malonyl-[ACP] methyl ester + S-adenosyl-L-homocysteine. It participates in cofactor biosynthesis; biotin biosynthesis. Functionally, converts the free carboxyl group of a malonyl-thioester to its methyl ester by transfer of a methyl group from S-adenosyl-L-methionine (SAM). It allows to synthesize pimeloyl-ACP via the fatty acid synthetic pathway. In Magnetococcus marinus (strain ATCC BAA-1437 / JCM 17883 / MC-1), this protein is Malonyl-[acyl-carrier protein] O-methyltransferase.